Here is a 116-residue protein sequence, read N- to C-terminus: Protein Wnt-5a (116 aa).

Residue S1 is the site of O-palmitoleoyl serine; by PORCN attachment. 2 N-linked (GlcNAc...) asparagine glycosylation sites follow: N69 and N83. C82 and C97 form a disulfide bridge.

The protein belongs to the Wnt family. Post-translationally, palmitoleoylation is required for efficient binding to frizzled receptors. Depalmitoleoylation leads to Wnt signaling pathway inhibition.

It is found in the secreted. It localises to the extracellular space. The protein resides in the extracellular matrix. Ligand for members of the frizzled family of seven transmembrane receptors. Can activate or inhibit canonical Wnt signaling, depending on receptor context. Required during embryogenesis for extension of the primary anterior-posterior axis. This Anser caerulescens (Snow goose) protein is Protein Wnt-5a (WNT5A).